We begin with the raw amino-acid sequence, 93 residues long: Large ribosomal subunit protein uL23cz/uL23cy (93 aa).

It belongs to the universal ribosomal protein uL23 family. Part of the 50S ribosomal subunit.

It is found in the plastid. Its subcellular location is the chloroplast. Functionally, binds to 23S rRNA. In Gossypium barbadense (Sea Island cotton), this protein is Large ribosomal subunit protein uL23cz/uL23cy (rpl23-A).